The following is a 366-amino-acid chain: Galactoside alpha-(1,2)-fucosyltransferase 1 (366 aa).

The Cytoplasmic segment spans residues 1-8 (MWPRSHRH). A helical; Signal-anchor for type II membrane protein membrane pass occupies residues 9-25 (LCLAFLLVCVLSAISFL). The Lumenal segment spans residues 26–366 (IHFHQDSIRH…LSPLWPLAEP (341 aa)). 3 N-linked (GlcNAc...) asparagine glycosylation sites follow: Asn-66, Asn-302, and Asn-328.

The protein belongs to the glycosyltransferase 11 family.

It is found in the golgi apparatus. Its subcellular location is the golgi stack membrane. The enzyme catalyses a beta-D-galactosyl-(1-&gt;4)-N-acetyl-beta-D-glucosaminyl derivative + GDP-beta-L-fucose = an alpha-L-Fuc-(1-&gt;2)-beta-D-Gal-(1-&gt;4)-beta-D-GlcNAc derivative + GDP + H(+). It catalyses the reaction a ganglioside GA1 + GDP-beta-L-fucose = a ganglioside Fuc-GA1 + GDP + H(+). It carries out the reaction a beta-D-Gal-(1-&gt;3)-beta-D-GlcNAc-(1-&gt;3)-beta-D-Gal-(1-&gt;4)-beta-D-Glc-(1&lt;-&gt;1')-Cer(d18:1(4E)) + GDP-beta-L-fucose = alpha-L-fucosyl-(1-&gt;2)- beta-D-galactosyl-(1-&gt;3)-N-acetyl-beta-D-glucosaminyl-(1-&gt;3)-beta-D-galactosyl-(1-&gt;4)-beta-D-glucosyl-(1&lt;-&gt;1')-N-acylsphing-4-enine + GDP + H(+). The catalysed reaction is a neolactoside nLc4Cer(d18:1(4E)) + GDP-beta-L-fucose = a neolactoside IV(2)-alpha-Fuc-nLc4Cer(d18:1(4E)) + GDP + H(+). The enzyme catalyses a ganglioside GM1 + GDP-beta-L-fucose = a ganglioside Fuc-GM1 + GDP + H(+). It catalyses the reaction beta-D-galactosyl-(1-&gt;3)-N-acetyl-D-galactosamine + GDP-beta-L-fucose = alpha-L-fucosyl-(1-&gt;2)-beta-D-galactosyl-(1-&gt;3)-N-acetyl-D-galactosamine + GDP + H(+). The protein operates within protein modification; protein glycosylation. Its function is as follows. Catalyzes the transfer of L-fucose, from a guanosine diphosphate-beta-L-fucose, to the terminal galactose residue of glycoconjugates through an alpha(1,2) linkage leading to H antigen synthesis that is an intermediate substrate in the synthesis of ABO blood group antigens. H antigen is essential for maturation of the glomerular layer of the main olfactory bulb, in cell migration and early cell-cell contacts during tumor associated angiogenesis. Preferentially fucosylates soluble lactose and to a lesser extent fucosylates glycolipids gangliosides GA1 and GM1a. The chain is Galactoside alpha-(1,2)-fucosyltransferase 1 from Saimiri sciureus (Common squirrel monkey).